Reading from the N-terminus, the 487-residue chain is MARPLSFHEDRLFPSDPATRSYARGLYALVKDLPIISPHGHTDPSWFATNAPFQDATDLLLAPDHYLFRMLYSQGVSLDALKVRSKAGVPDTDPREAWRVFASHFYLFRGTPSWVWLNHVFSQVFGFTEFLEASNADDYFDRITAALATDAFRPRALFDRFNIETLATTEGPHESLQHHAAIRESGWGGHVITAYRPDAVIDFEDERSPRAFERFAETSGQDVYSWKSYLEAHRLRRQAFIDAGATSSDHGHPTAATADLSDVEAEALFNSLVKGDVTPEKAELFRAQMLTEMAKMSLDDGLVMQIHPGSHRNHNVGLLNSHGRDKGADIPMRTEYVDALKPLLTRLGNDPRLSIILFTLDETTYSRELAPLAGHYPVLKLGPSWWFHDSPEGMMRFREQVTETAGFYNTVGFNDDTRAFLSIPARHDVARRVDSAFLARMVAEHRMDLVEAEELIVDLTYNLPKKAYKLDQRPDWARPATLRAAAE.

The protein belongs to the metallo-dependent hydrolases superfamily. Uronate isomerase family.

It catalyses the reaction D-glucuronate = D-fructuronate. The catalysed reaction is aldehydo-D-galacturonate = keto-D-tagaturonate. It participates in carbohydrate metabolism; pentose and glucuronate interconversion. This is Uronate isomerase from Caulobacter vibrioides (strain ATCC 19089 / CIP 103742 / CB 15) (Caulobacter crescentus).